Here is a 1213-residue protein sequence, read N- to C-terminus: A disintegrin and metalloproteinase with thrombospondin motifs 2 (1213 aa).

An N-terminal signal peptide occupies residues 1 to 28 (MDPPAGAARRLLCPALLLLLLPPPPLLL). Positions 29-260 (LPPPPASVRL…INSSRRRVRR (232 aa)) are excised as a propeptide. Asn111 carries an N-linked (GlcNAc...) asparagine glycan. Positions 211-232 (YRRPPTPKPPPVSEPQALDTGV) are disordered. Over residues 214–223 (PPTPKPPPVS) the composition is skewed to pro residues. A glycan (N-linked (GlcNAc...) asparagine) is linked at Asn252. Residues 267–471 (YNIEVLLGVD…HSYDCLRDDP (205 aa)) form the Peptidase M12B domain. 10 disulfides stabilise this stretch: Cys344–Cys393, Cys387–Cys466, Cys426–Cys452, Cys493–Cys518, Cys504–Cys527, Cys513–Cys546, Cys540–Cys551, Cys574–Cys611, Cys578–Cys616, and Cys589–Cys601. His409 contacts Zn(2+). Residue Glu410 is part of the active site. His413 and His419 together coordinate Zn(2+). The region spanning 480 to 560 (PQLPGLHYSM…CIWLTPDILK (81 aa)) is the Disintegrin domain. Residues 561–617 (RDGNWGAWTPFGSCSRTCGTGVKFRTRQCDNPHPANGGRTCSGLAYDFQLCNPQDCP) form the TSP type-1 1 domain. The short motif at 692 to 694 (RGD) is the Cell attachment site element. Residues 723-851 (CKVVKGTFTR…LNVDDNNVLE (129 aa)) are spacer. 3 consecutive TSP type-1 domains span residues 855 to 913 (VRHE…NPQE), 915 to 975 (SQPV…NREL), and 976 to 1030 (CPGR…APCP). Residues Asn949, Asn950, and Asn994 are each glycosylated (N-linked (GlcNAc...) asparagine). 3 disulfides stabilise this stretch: Cys988/Cys1024, Cys992/Cys1029, and Cys1003/Cys1013. N-linked (GlcNAc...) asparagine glycosylation is present at Asn1032. Residues 1060 to 1098 (SKDQCQGDKSMFCRMEVLSRYCSIPSYNKLCCKSCNPPR) enclose the PLAC domain. Asn1099, Asn1147, and Asn1152 each carry an N-linked (GlcNAc...) asparagine glycan.

May belong to a multimeric complex. Binds specifically to collagen type XIV. Zn(2+) serves as cofactor. In terms of processing, the precursor is cleaved by a furin endopeptidase. Post-translationally, glycosylated. Can be O-fucosylated by POFUT2 on a serine or a threonine residue found within the consensus sequence C1-X(2)-(S/T)-C2-G of the TSP type-1 repeat domains where C1 and C2 are the first and second cysteine residue of the repeat, respectively. Fucosylated repeats can then be further glycosylated by the addition of a beta-1,3-glucose residue by the glucosyltransferase, B3GALTL. Fucosylation mediates the efficient secretion of ADAMTS family members. Can also be C-glycosylated with one or two mannose molecules on tryptophan residues within the consensus sequence W-X-X-W of the TPRs, and N-glycosylated. These other glycosylations can also facilitate secretion.

The protein localises to the secreted. Its subcellular location is the extracellular space. The protein resides in the extracellular matrix. The catalysed reaction is Cleaves the N-propeptide of collagen chain alpha1(I) at Pro-|-Gln and of alpha1(II) and alpha2(I) at Ala-|-Gln.. In terms of biological role, cleaves the propeptides of type I and II collagen prior to fibril assembly. Does not act on type III collagen. Cleaves lysyl oxidase LOX at a site downstream of its propeptide cleavage site to produce a short LOX form with reduced collagen-binding activity. In Mus musculus (Mouse), this protein is A disintegrin and metalloproteinase with thrombospondin motifs 2 (Adamts2).